The chain runs to 77 residues: Translation initiation factor IF-1, chloroplastic (77 aa).

Residues M1–R71 form the S1-like domain.

This sequence belongs to the IF-1 family. As to quaternary structure, component of the 30S ribosomal translation pre-initiation complex which assembles on the 30S ribosome in the order IF-2 and IF-3, IF-1 and N-formylmethionyl-tRNA(fMet); mRNA recruitment can occur at any time during PIC assembly.

It localises to the plastid. The protein localises to the chloroplast. Its function is as follows. One of the essential components for the initiation of protein synthesis. Stabilizes the binding of IF-2 and IF-3 on the 30S subunit to which N-formylmethionyl-tRNA(fMet) subsequently binds. Helps modulate mRNA selection, yielding the 30S pre-initiation complex (PIC). Upon addition of the 50S ribosomal subunit IF-1, IF-2 and IF-3 are released leaving the mature 70S translation initiation complex. The sequence is that of Translation initiation factor IF-1, chloroplastic from Liriodendron tulipifera (Tuliptree).